The sequence spans 207 residues: Germin-like protein 1 (207 aa).

Residues 1–17 form the signal peptide; it reads MLRIIFLLSLLFALSND. An intrachain disulfide couples Cys23 to Cys38. Positions 51–197 constitute a Cupin type-1 domain; it reads FSLGTPGNTT…TTFLPPATVK (147 aa). Asn58 carries N-linked (GlcNAc...) asparagine glycosylation. Mn(2+)-binding residues include His99, His101, Glu106, and His145.

The protein belongs to the germin family. In terms of assembly, oligomer (believed to be a pentamer but probably hexamer).

The protein resides in the secreted. It is found in the extracellular space. The protein localises to the apoplast. May play a role in plant defense. Probably has no oxalate oxidase activity even if the active site is conserved. This chain is Germin-like protein 1 (GER1), found in Brassica napus (Rape).